A 403-amino-acid chain; its full sequence is Multifunctional CCA protein (403 aa).

Residues Gly8 and Arg11 each contribute to the ATP site. Positions 8 and 11 each coordinate CTP. The Mg(2+) site is built by Asp21 and Asp23. Positions 91, 137, and 140 each coordinate ATP. 3 residues coordinate CTP: Arg91, Arg137, and Arg140. An HD domain is found at 228–329 (TGIHTLMVAK…LKVLGLLDVW (102 aa)).

The protein belongs to the tRNA nucleotidyltransferase/poly(A) polymerase family. Bacterial CCA-adding enzyme type 1 subfamily. As to quaternary structure, monomer. Can also form homodimers and oligomers. Mg(2+) is required as a cofactor. It depends on Ni(2+) as a cofactor.

It catalyses the reaction a tRNA precursor + 2 CTP + ATP = a tRNA with a 3' CCA end + 3 diphosphate. The catalysed reaction is a tRNA with a 3' CCA end + 2 CTP + ATP = a tRNA with a 3' CCACCA end + 3 diphosphate. Its function is as follows. Catalyzes the addition and repair of the essential 3'-terminal CCA sequence in tRNAs without using a nucleic acid template. Adds these three nucleotides in the order of C, C, and A to the tRNA nucleotide-73, using CTP and ATP as substrates and producing inorganic pyrophosphate. tRNA 3'-terminal CCA addition is required both for tRNA processing and repair. Also involved in tRNA surveillance by mediating tandem CCA addition to generate a CCACCA at the 3' terminus of unstable tRNAs. While stable tRNAs receive only 3'-terminal CCA, unstable tRNAs are marked with CCACCA and rapidly degraded. This is Multifunctional CCA protein from Vibrio cholerae serotype O1 (strain ATCC 39315 / El Tor Inaba N16961).